Consider the following 78-residue polypeptide: Small integral membrane protein 1 (78 aa).

Methionine 1 carries the post-translational modification N-acetylmethionine. Positions methionine 1–arginine 18 are enriched in basic and acidic residues. The tract at residues methionine 1 to glycine 20 is disordered. At methionine 1 to lysine 46 the chain is on the cytoplasmic side. Residues serine 6, serine 17, serine 22, and serine 27 each carry the phosphoserine modification. The chain crosses the membrane as a helical; Signal-anchor for type II membrane protein span at residues leucine 47–glycine 67. Topologically, residues tyrosine 68–lysine 78 are extracellular. A displays the Vel antigen region spans residues tyrosine 68–lysine 78.

This sequence belongs to the SMIM1 family. As to quaternary structure, homooligomer; disulfide-linked. Highly expressed in the bone marrow and expressed at lower levels in non-hematopoietic tissues. Highly expressed in erythroleukemia cell lines. Up-regulated in CD34+ hematopoietic progenitors cultured toward red blood cells.

Its subcellular location is the cell membrane. Its function is as follows. Regulator of red blood cell formation. The protein is Small integral membrane protein 1 of Homo sapiens (Human).